Here is a 273-residue protein sequence, read N- to C-terminus: Ribonuclease PH (273 aa).

Residues Arg86 and 124–126 (GTR) contribute to the phosphate site. Residues 254 to 273 (GHQEPGEGAGVSLAPGGGGL) are disordered.

Belongs to the RNase PH family. As to quaternary structure, homohexameric ring arranged as a trimer of dimers.

It catalyses the reaction tRNA(n+1) + phosphate = tRNA(n) + a ribonucleoside 5'-diphosphate. Its function is as follows. Phosphorolytic 3'-5' exoribonuclease that plays an important role in tRNA 3'-end maturation. Removes nucleotide residues following the 3'-CCA terminus of tRNAs; can also add nucleotides to the ends of RNA molecules by using nucleoside diphosphates as substrates, but this may not be physiologically important. Probably plays a role in initiation of 16S rRNA degradation (leading to ribosome degradation) during starvation. The sequence is that of Ribonuclease PH from Symbiobacterium thermophilum (strain DSM 24528 / JCM 14929 / IAM 14863 / T).